A 497-amino-acid chain; its full sequence is Histidine--tRNA ligase (497 aa).

Belongs to the class-II aminoacyl-tRNA synthetase family. Homodimer.

It localises to the cytoplasm. It catalyses the reaction tRNA(His) + L-histidine + ATP = L-histidyl-tRNA(His) + AMP + diphosphate + H(+). This chain is Histidine--tRNA ligase, found in Dinoroseobacter shibae (strain DSM 16493 / NCIMB 14021 / DFL 12).